A 312-amino-acid polypeptide reads, in one-letter code: Heme oxygenase 2 (312 aa).

N-acetylserine is present on Ser2. Ser2 is subject to Phosphoserine. His41 contributes to the heme b binding site. HRM repeat units lie at residues 260-265 (KCPYYA) and 277-282 (SCPFRA). S-nitrosocysteine is present on residues Cys261 and Cys278.

It belongs to the heme oxygenase family. Post-translationally, S-nitrosylated by BLVRB.

It localises to the microsome. The protein resides in the endoplasmic reticulum. The catalysed reaction is heme b + 3 reduced [NADPH--hemoprotein reductase] + 3 O2 = biliverdin IXalpha + CO + Fe(2+) + 3 oxidized [NADPH--hemoprotein reductase] + 3 H2O + H(+). Functionally, heme oxygenase cleaves the heme ring at the alpha methene bridge to form biliverdin. Biliverdin is subsequently converted to bilirubin by biliverdin reductase. Under physiological conditions, the activity of heme oxygenase is highest in the spleen, where senescent erythrocytes are sequestrated and destroyed. Heme oxygenase 2 could be implicated in the production of carbon monoxide in brain where it could act as a neurotransmitter. This Oryctolagus cuniculus (Rabbit) protein is Heme oxygenase 2 (HMOX2).